An 809-amino-acid chain; its full sequence is Probable disease resistance protein At5g66900 (809 aa).

In terms of domain architecture, RPW8 spans 1–150 (MNDWASLGIG…LSKRMDLLSV (150 aa)). A coiled-coil region spans residues 50–86 (PLTQKIDSMQKELDFGVKELKELRDTIERADVAVRKF). NB-ARC domains are found at residues 153-280 (PVFR…DDVW) and 339-438 (SPDE…DMWV). Residue 194 to 201 (APPGCGKT) coordinates ATP. Positions 494-515 (QSEFKENLERKRLNLEILENTF) form a coiled coil. LRR repeat units follow at residues 650–672 (KLQE…ISEI), 674–696 (SLKT…IGNL), 698–720 (RLEV…TEGL), and 722–744 (NLRF…IGKL).

Belongs to the disease resistance NB-LRR family.

Its function is as follows. Probable disease resistance protein. This chain is Probable disease resistance protein At5g66900, found in Arabidopsis thaliana (Mouse-ear cress).